A 326-amino-acid polypeptide reads, in one-letter code: Tetraacyldisaccharide 4'-kinase (326 aa).

Residue 52-59 (TLGGAGKT) participates in ATP binding.

The protein belongs to the LpxK family.

The enzyme catalyses a lipid A disaccharide + ATP = a lipid IVA + ADP + H(+). The protein operates within glycolipid biosynthesis; lipid IV(A) biosynthesis; lipid IV(A) from (3R)-3-hydroxytetradecanoyl-[acyl-carrier-protein] and UDP-N-acetyl-alpha-D-glucosamine: step 6/6. Its function is as follows. Transfers the gamma-phosphate of ATP to the 4'-position of a tetraacyldisaccharide 1-phosphate intermediate (termed DS-1-P) to form tetraacyldisaccharide 1,4'-bis-phosphate (lipid IVA). This chain is Tetraacyldisaccharide 4'-kinase, found in Methylobacterium radiotolerans (strain ATCC 27329 / DSM 1819 / JCM 2831 / NBRC 15690 / NCIMB 10815 / 0-1).